We begin with the raw amino-acid sequence, 184 residues long: Elongation factor P 1 (184 aa).

This sequence belongs to the elongation factor P family.

It localises to the cytoplasm. It functions in the pathway protein biosynthesis; polypeptide chain elongation. In terms of biological role, involved in peptide bond synthesis. Stimulates efficient translation and peptide-bond synthesis on native or reconstituted 70S ribosomes in vitro. Probably functions indirectly by altering the affinity of the ribosome for aminoacyl-tRNA, thus increasing their reactivity as acceptors for peptidyl transferase. This Protochlamydia amoebophila (strain UWE25) protein is Elongation factor P 1 (efp1).